Here is a 1512-residue protein sequence, read N- to C-terminus: Non-structural polyprotein 1AB (1512 aa).

5 consecutive transmembrane segments (helical) span residues 190–210 (LCLW…SNAA), 295–315 (VVRF…FVLI), 323–343 (AIIS…LLPF), 360–380 (IYGL…VGLV), and 399–419 (ALAW…MAFT). Catalysis depends on charge relay system; for serine protease activity residues H524, D556, and S621. Residue Y753 is modified to O-(5'-phospho-RNA)-tyrosine. Positions 940–981 (PVIQQVEQQPQVEQQQQPQQPVVEEKKRTPPPKPQRKPKTGA) are disordered. Residues 941-961 (VIQQVEQQPQVEQQQQPQQPV) show a composition bias toward low complexity. In terms of domain architecture, RdRp catalytic spans 1257–1390 (TQVLELDWTR…AFNPSFVNYD (134 aa)).

This sequence belongs to the astroviridae polyprotein 1AB family. As to quaternary structure, monomer. In terms of processing, cleaved by the viral and host proteases. The protease is probably autocatalytically cleaved.

The protein resides in the host membrane. The enzyme catalyses RNA(n) + a ribonucleoside 5'-triphosphate = RNA(n+1) + diphosphate. Functionally, responsible for the cleavage of the polyprotein into functional products. Its function is as follows. Protein covalently attached to the 5' extremity of the genomic and subgenomic RNAs. It may serve as a primer for the replicase. This chain is Non-structural polyprotein 1AB (ORF1), found in Gallus gallus (Chicken).